The chain runs to 202 residues: Large ribosomal subunit protein bL17 (202 aa).

Residues 132-202 (DAAQKAASAG…TEVEKADDDK (71 aa)) are disordered. A compositionally biased stretch (low complexity) spans 134–168 (AQKAASAGAQEVTAAAAPQAAVEPEAVETEASAET). Positions 169 to 193 (AEAEVETAEVEAVDEASAEEADEAT) are enriched in acidic residues.

The protein belongs to the bacterial ribosomal protein bL17 family. In terms of assembly, part of the 50S ribosomal subunit. Contacts protein L32.

The polypeptide is Large ribosomal subunit protein bL17 (Mycolicibacterium vanbaalenii (strain DSM 7251 / JCM 13017 / BCRC 16820 / KCTC 9966 / NRRL B-24157 / PYR-1) (Mycobacterium vanbaalenii)).